The sequence spans 515 residues: MDEFHRYGKEDSSWQQCFLYPLFFQEDLYAISHDHYLDGSSSSEPMEHLSSNDQFSFLTVKRLIGQIRQQNHSIVLFVNCDPNPLVDRKKSSYSESVLEGLTLVLEVPFSIRSKYSVEGMNEWKSFRSIHSIFPFLEDKFPHSNYVSDTRIPYSIHPEILVRTFRRWIGDAPSLHPLRSILYEYRNSSESLQRSIIVVPKVNTRFFLFLWNNYVYECESILVSLLKRSSHSRSLSHGSFPQRTHFHRKIKNIFLFSRRNSLQSIWSLKDPNIHYVRYGERSIIAIKGTHLLVKKYRYYLPIFRQCYFHLWNEPYRVCSHQLSKNCSSSLGYFMRVRMKPLLVKTKMLDELFIADLITDEFDPIVPIVPIIGLLSREKFCDISGRPISKLSWTSLTDDDILDRFDRIWRNLFHYYSGSFGRDGLYRIKYILSLSCAKTLACKHKSTIRVVRKELGPELFKKSFSKERELDSPPFSSKAAARSQRERIWHSDIPQINPLAHSWQKIQDLKIENLFDQ.

The protein belongs to the intron maturase 2 family. MatK subfamily.

The protein resides in the plastid. The protein localises to the chloroplast. Usually encoded in the trnK tRNA gene intron. Probably assists in splicing its own and other chloroplast group II introns. The polypeptide is Maturase K (Picea sitchensis (Sitka spruce)).